We begin with the raw amino-acid sequence, 495 residues long: Protein adenylyltransferase Fic (495 aa).

Residues 1–27 (MGTEAEQPSPPSPPAQQQEQTNPPLWN) are disordered. Residues 36–55 (LYRLVLFFIAGSLAAWTIHA) traverse the membrane as a helical segment. 2 TPR repeats span residues 121-154 (ALVSLRMAQDMYLAGKDDKASRLFEHALALAPRH) and 155-189 (PEVLLRYGEFLEHSQRNIVLADQYYFQALTISPSN). The Inhibitory (S/T)XXXE(G/N) motif signature appears at 246 to 251 (SVGIEG). ATP contacts are provided by residues Glu250 and 331 to 334 (VGGH). The 136-residue stretch at 300-435 (ITIKDILELH…IRPFVRFIAD (136 aa)) folds into the Fido domain. The active site involves His378. ATP-binding positions include 382 to 389 (DGNGRTSR), 414 to 415 (YY), and Asn422.

It belongs to the fic family. Homodimer.

Its subcellular location is the membrane. The catalysed reaction is L-tyrosyl-[protein] + ATP = O-(5'-adenylyl)-L-tyrosyl-[protein] + diphosphate. The enzyme catalyses L-threonyl-[protein] + ATP = 3-O-(5'-adenylyl)-L-threonyl-[protein] + diphosphate. It catalyses the reaction 3-O-(5'-adenylyl)-L-threonyl-[protein] + H2O = L-threonyl-[protein] + AMP + H(+). The side chain of Glu-250 determines which of the two opposing activities (AMPylase or de-AMPylase) will take place. In response to endoplasmic reticulum stress, mediates de-AMPylase activity. Adenylyltransferase activity is inhibited by the inhibitory helix present at the N-terminus: Glu-250 binds ATP and competes with ATP-binding at Arg-389, thereby preventing adenylyltransferase activity. In unstressed cells, disengagement of Glu-250 promotes adenylyltransferase activity. Activation dissociates ATP-binding from Glu-250, allowing ordered binding of the entire ATP moiety with the alpha-phosphate in an orientation that is productive for accepting an incoming target hydroxyl side chain. In terms of biological role, protein that can both mediate the addition of adenosine 5'-monophosphate (AMP) to specific residues of target proteins (AMPylation), and the removal of the same modification from target proteins (de-AMPylation), depending on the context. The side chain of Glu-250 determines which of the two opposing activities (AMPylase or de-AMPylase) will take place. Acts as a key regulator of the unfolded protein response (UPR) by mediating AMPylation or de-AMPylation of Hsc70-3/BiP. In unstressed cells, acts as an adenylyltransferase by mediating AMPylation of Hsc70-3/BiP at 'Thr-518', thereby inactivating it. In response to endoplasmic reticulum stress, acts as a phosphodiesterase by mediating removal of ATP (de-AMPylation) from Hsc70-3/BiP at 'Thr-518', leading to restore HSPA5/BiP activity. In Drosophila yakuba (Fruit fly), this protein is Protein adenylyltransferase Fic.